We begin with the raw amino-acid sequence, 303 residues long: Major fimbrium anchoring subunit FimB (303 aa).

The first 22 residues, 1 to 22 (MNDAKKYIVSVLILLVAGMFGG), serve as a signal peptide directing secretion. The N-palmitoyl cysteine moiety is linked to residue cysteine 23. A lipid anchor (S-diacylglycerol cysteine) is attached at cysteine 23.

The protein belongs to the bacteroidetes fimbrillin superfamily. FimB/Mfa2 family. As to quaternary structure, fimB is not part of the fimbrium itself, but anchors the fimbrium in the outer membrane. Linear, head-to-tail oligomerization of fimbrial subunits mediates assembly of the fimbrium stalk, while the minor components FimC, FimD and FimE probably form the fimbrium tip. The anchoring subunit FimB limits fimbrium length and is important for solid fimbrium attachment to the outer membrane. In its absence, the major fimbriae become very long and are easily detached from the membrane.

It is found in the cell outer membrane. Its function is as follows. Anchoring subunit of the major fimbriae. Regulates fimbrial length. These filamentous pili are attached to the cell surface; they mediate biofilm formation, adhesion onto host cells and onto other bacteria that are part of the oral microbiome. Fimbriae of P.gingivalis are major virulence factors. This chain is Major fimbrium anchoring subunit FimB, found in Porphyromonas gingivalis (strain ATCC BAA-308 / W83).